We begin with the raw amino-acid sequence, 184 residues long: MKHKLMTSTIASLMFVAGAAVAADPTPVSVSGGTIHFEGKLVYAACAVSTKSADQTVTLGQYRTASFTAIGDTTAQVPFSIVLNDCDPKVAATAAVAFSGQADNTNTNLLAVSSADNSTTATGVGIEILDNTSSPLKPDGATFSAKQALVEGTNTLRFTARYKATAAATPGQANADATFIMKYE.

Positions 1 to 22 (MKHKLMTSTIASLMFVAGAAVA) are cleaved as a signal peptide. Cysteine 46 and cysteine 86 are oxidised to a cystine.

This sequence belongs to the fimbrial protein family.

Its subcellular location is the fimbrium. In terms of biological role, fimbriae (also called pili), polar filaments radiating from the surface of the bacterium to a length of 0.5-1.5 micrometers and numbering 100-300 per cell, enable bacteria to colonize the epithelium of specific host organs. This chain is Type-1 fimbrial protein, A chain (fimA), found in Salmonella typhi.